Here is a 455-residue protein sequence, read N- to C-terminus: Chromosomal replication initiator protein DnaA (455 aa).

Residues 1-73 form a domain I, interacts with DnaA modulators region; the sequence is MTISPQYIWN…LEEVETIVGY (73 aa). The tract at residues 73–114 is domain II; sequence YPIAVKLTTSQEQNLRIVDKNKDNLSSTKLQNKRQQESPKLN. The interval 115 to 331 is domain III, AAA+ region; that stretch reads QLNPRYNFSR…GALIRAVTYI (217 aa). ATP-binding residues include G159, G161, K162, and T163. Residues 332-455 are domain IV, binds dsDNA; it reads SISGLSMTVE…RINIASRNQN (124 aa).

It belongs to the DnaA family. In terms of assembly, oligomerizes as a right-handed, spiral filament on DNA at oriC.

It is found in the cytoplasm. Its function is as follows. Plays an essential role in the initiation and regulation of chromosomal replication. ATP-DnaA binds to the origin of replication (oriC) to initiate formation of the DNA replication initiation complex once per cell cycle. Binds the DnaA box (a 9 base pair repeat at the origin) and separates the double-stranded (ds)DNA. Forms a right-handed helical filament on oriC DNA; dsDNA binds to the exterior of the filament while single-stranded (ss)DNA is stabiized in the filament's interior. The ATP-DnaA-oriC complex binds and stabilizes one strand of the AT-rich DNA unwinding element (DUE), permitting loading of DNA polymerase. After initiation quickly degrades to an ADP-DnaA complex that is not apt for DNA replication. Binds acidic phospholipids. The polypeptide is Chromosomal replication initiator protein DnaA (Crocosphaera subtropica (strain ATCC 51142 / BH68) (Cyanothece sp. (strain ATCC 51142))).